Reading from the N-terminus, the 221-residue chain is CDP-diacylglycerol--glycerol-3-phosphate 3-phosphatidyltransferase (221 aa).

5 helical membrane-spanning segments follow: residues 8 to 28 (ILTVLRLLAAPGVAVMFLYFH), 34 to 54 (WFALTLFILAAVTDFFDGYLA), 75 to 95 (MVVIALVIITGYSGMNPWLIL), 133 to 153 (AQMVAIAILFLGTGLEHLEGI), and 187 to 207 (ATWLGLALIWIAAALTFITGW).

This sequence belongs to the CDP-alcohol phosphatidyltransferase class-I family.

The protein localises to the cell membrane. It carries out the reaction a CDP-1,2-diacyl-sn-glycerol + sn-glycerol 3-phosphate = a 1,2-diacyl-sn-glycero-3-phospho-(1'-sn-glycero-3'-phosphate) + CMP + H(+). The protein operates within phospholipid metabolism; phosphatidylglycerol biosynthesis; phosphatidylglycerol from CDP-diacylglycerol: step 1/2. Its function is as follows. This protein catalyzes the committed step to the synthesis of the acidic phospholipids. This chain is CDP-diacylglycerol--glycerol-3-phosphate 3-phosphatidyltransferase (pgsA), found in Cereibacter sphaeroides (strain ATCC 17023 / DSM 158 / JCM 6121 / CCUG 31486 / LMG 2827 / NBRC 12203 / NCIMB 8253 / ATH 2.4.1.) (Rhodobacter sphaeroides).